A 658-amino-acid polypeptide reads, in one-letter code: Glycogen debranching enzyme (658 aa).

Residue Asp-336 is the Nucleophile of the active site. Glu-371 functions as the Proton donor in the catalytic mechanism. Residues Ala-460–Gly-484 form a disordered region.

The protein belongs to the glycosyl hydrolase 13 family.

It catalyses the reaction Hydrolysis of (1-&gt;6)-alpha-D-glucosidic linkages to branches with degrees of polymerization of three or four glucose residues in limit dextrin.. Its pathway is glycan degradation; glycogen degradation. Functionally, removes maltotriose and maltotetraose chains that are attached by 1,6-alpha-linkage to the limit dextrin main chain, generating a debranched limit dextrin. The chain is Glycogen debranching enzyme from Escherichia fergusonii (strain ATCC 35469 / DSM 13698 / CCUG 18766 / IAM 14443 / JCM 21226 / LMG 7866 / NBRC 102419 / NCTC 12128 / CDC 0568-73).